A 249-amino-acid chain; its full sequence is MAARKAMVAGNWKMNGSLELVKQMSDAINNVKSNEIDIVLFPPFPLVSAMIASGVSTGTQTVSENTPGAFTGEVDAQLIKELGAQYVLVGHSERRSIYKESNDVVAAKFARAQQVGLTPILCVGESESEQENGKTEQIVAAQIDAVIEKLGVAALKDSVIAYEPVWAIGTGKTASPEQAQSVHKFIRDKIASLNSDLAQGLTILYGGSVNEKNSELLFAQTDIDGGLIGGASLKADSFTAICNSAKGTV.

11-13 (NWK) lines the substrate pocket. Residue histidine 91 is the Electrophile of the active site. Catalysis depends on glutamate 163, which acts as the Proton acceptor. Substrate contacts are provided by residues glycine 169, serine 208, and 229-230 (GG).

It belongs to the triosephosphate isomerase family. Homodimer.

Its subcellular location is the cytoplasm. It carries out the reaction D-glyceraldehyde 3-phosphate = dihydroxyacetone phosphate. It participates in carbohydrate biosynthesis; gluconeogenesis. Its pathway is carbohydrate degradation; glycolysis; D-glyceraldehyde 3-phosphate from glycerone phosphate: step 1/1. Functionally, involved in the gluconeogenesis. Catalyzes stereospecifically the conversion of dihydroxyacetone phosphate (DHAP) to D-glyceraldehyde-3-phosphate (G3P). The protein is Triosephosphate isomerase of Pseudoalteromonas translucida (strain TAC 125).